Here is a 380-residue protein sequence, read N- to C-terminus: MKKIILLGATGSIGTQTLAIIRENPEKFQVVALSFGRNMERGRAIIKEFKPKMVAVWHTRDRVTLEAEFPNVKFFNGLEGLREVATYLDGDVLLNAVMGSVGLLPTLDAIEAGKAIAIANKETLVTAGHLVMRAAKEKNISLLPVDSEHSAILQALNGENTERIEKIILTASGGSFRDKTREQLSAVTVKEALKHPNWNMGNKLTIDSATMFNKGLEVMEAHWLFGVDYDDIEVVIQRESIIHSMVQFVDGSFIAQLGTPDMRMPIQYALTYPDRLYIPYEKEFRITDFSALHFEKVDYERFPALKLAYNAGKIGGTMPTVLNAANEIAVAGFLNGQVAFYNIEALVENAMNRHTSISNPDLDTILQVDQETRAYVKTLL.

Residues Thr10, Gly11, Ser12, Ile13, Gly36, Arg37, Asn38, and Asn120 each coordinate NADPH. Lys121 is a 1-deoxy-D-xylulose 5-phosphate binding site. Residue Glu122 participates in NADPH binding. Residue Asp146 participates in Mn(2+) binding. Ser147, Glu148, Ser172, and His195 together coordinate 1-deoxy-D-xylulose 5-phosphate. Position 148 (Glu148) interacts with Mn(2+). Residue Gly201 coordinates NADPH. 1-deoxy-D-xylulose 5-phosphate-binding residues include Ser208, Asn213, Lys214, and Glu217. Glu217 provides a ligand contact to Mn(2+).

It belongs to the DXR family. Mg(2+) serves as cofactor. It depends on Mn(2+) as a cofactor.

It catalyses the reaction 2-C-methyl-D-erythritol 4-phosphate + NADP(+) = 1-deoxy-D-xylulose 5-phosphate + NADPH + H(+). It functions in the pathway isoprenoid biosynthesis; isopentenyl diphosphate biosynthesis via DXP pathway; isopentenyl diphosphate from 1-deoxy-D-xylulose 5-phosphate: step 1/6. In terms of biological role, catalyzes the NADPH-dependent rearrangement and reduction of 1-deoxy-D-xylulose-5-phosphate (DXP) to 2-C-methyl-D-erythritol 4-phosphate (MEP). The chain is 1-deoxy-D-xylulose 5-phosphate reductoisomerase from Listeria monocytogenes serovar 1/2a (strain ATCC BAA-679 / EGD-e).